Reading from the N-terminus, the 758-residue chain is MGSFLRSFRRDVGSSTPSVGATPAKKEPLALPITPLEKMLQEMGSDSVRQDGSDKFFGMENYGNTCYCNSILQCLYYSVPFREAVLNYPTRTPIESLEAALAKNLRYQNFAANQEAEAQAEKQRLANAQRPGAPPAQPPKPEDKDSSEYKKKIALQSLPLLETKNNAGSYGMSESLFTSLKDIFESVVASQSRIGIVRPQHFLDVLRRENEMFRSAMHQDAHEFLNLVLNEVVANVEAEAMKQPIPSLPPADTTDSSRQSISSGSKTPNTTRWVHELFEGTLTSETQCLTCENVSQRDEIFLDLSVDLEQHSSVTSCLRKFSAEEMLCERNKFHCDNCGGLQEAEKRMKIKRLPRILALHLKRFKYTEDLQRLQKLFHRVVYPYHLRLFNTTDDAEDPDRLYELYAVVVHIGGGPYHGHYVSIIKTQDRGWLLFDDEMVEPVDKNYVRNFFGDKPGLACAYVLFYQETTLEAVLKEQEMENMNASAADANEAAVKPNGFPQPAGLAHVHSASQIPVQDEPQRHTGLRRAPTAPQLPTHTEYPGPDIEPSSPAVATPPPVPPIPETANRPLSPKKSDIQSKKERAKEEKERKAAEKEMEKQRRKEQEARVKENQRREEAELKAALEASKASKADEDRRNPTENGKDGDPKRSSNGLSRLKRGSKSFSQRLGKDKESRASSSGLPSVPSAEPLTPNPVPLEPVQQLSPRKASPPKESHVVHKPLGQDDEPDALKSPKGDRAGHGKWRSFSIRKKSFSILS.

The segment at Met1–Glu27 is disordered. The USP domain maps to Phe57–Thr468. Cys66 acts as the Nucleophile in catalysis. Disordered stretches follow at residues Ala116 to Glu148 and Gln243 to Pro268. The span at Thr253–Pro268 shows a compositional bias: polar residues. His419 functions as the Proton acceptor in the catalytic mechanism. The tract at residues Ile514 to Trp744 is disordered. Residues Ala554–Pro563 show a composition bias toward pro residues. Positions Lys573 to Lys631 form a coiled coil. Basic and acidic residues-rich tracts occupy residues Lys573–Arg650 and Asp729–Gly740.

Belongs to the peptidase C19 family. Interacts with creA, creC and qutD.

It catalyses the reaction Thiol-dependent hydrolysis of ester, thioester, amide, peptide and isopeptide bonds formed by the C-terminal Gly of ubiquitin (a 76-residue protein attached to proteins as an intracellular targeting signal).. Ubiquitin thioesterase component of the regulatory network controlling carbon source utilization through ubiquitination and deubiquitination involving creA, creB, creC, creD and acrB. Deubiquitinates the creA catabolic repressor and the quinate permease qutD. Also plays a role in response to carbon starvation and the control of extracellular proteases activity. This Aspergillus niger (strain ATCC MYA-4892 / CBS 513.88 / FGSC A1513) protein is Probable ubiquitin carboxyl-terminal hydrolase creB (creB).